Consider the following 494-residue polypeptide: Alpha-amylase-related protein (494 aa).

A signal peptide spans 1 to 20 (MFKFASAVILCVVAASSTLA). Q21 is modified (pyrrolidone carboxylic acid). C48 and C104 are oxidised to a cystine. Ca(2+) is bound by residues N118, Q169, and D178. The cysteines at positions 157 and 171 are disulfide-linked. Residue R206 participates in chloride binding. The Nucleophile role is filled by D208. Residue H212 participates in Ca(2+) binding. E245 (proton donor) is an active-site residue. Chloride-binding residues include N308 and R343. Intrachain disulfides connect C376-C382, C418-C441, and C448-C460.

This sequence belongs to the glycosyl hydrolase 13 family. In terms of assembly, monomer. It depends on Ca(2+) as a cofactor. Chloride is required as a cofactor.

The protein resides in the secreted. The catalysed reaction is Endohydrolysis of (1-&gt;4)-alpha-D-glucosidic linkages in polysaccharides containing three or more (1-&gt;4)-alpha-linked D-glucose units.. This chain is Alpha-amylase-related protein (Amyrel), found in Drosophila varians (Fruit fly).